The following is a 160-amino-acid chain: MVPKLFTSPICLLLLLGLMGVEGSLHAKPRQFTWAQWFEIQHINMTSGQCTNAMLVINNYQRRCKNQNTFLLTTFADVVHVCGNPSMPCPSNTSLNNCHHSGVQVPLIHCNLTTPSRRISNCRYTQTTANKYYIVACNNSDPVRDPPQYPVVPVHLDRVI.

An N-terminal signal peptide occupies residues 1–27 (MVPKLFTSPICLLLLLGLMGVEGSLHA). Trp34 carries a C-linked (Man) tryptophan glycan. The active-site Proton acceptor is His42. Asn44 is a glycosylation site (N-linked (GlcNAc...) asparagine). Cystine bridges form between Cys50–Cys110, Cys64–Cys122, Cys82–Cys137, and Cys89–Cys98. Tyr60 carries the post-translational modification 3'-nitrotyrosine. 65 to 69 (KNQNT) provides a ligand contact to substrate. Asn92, Asn111, and Asn138 each carry an N-linked (GlcNAc...) asparagine glycan. The Proton donor role is filled by His155.

It belongs to the pancreatic ribonuclease family. Interacts with and forms a tight 1:1 complex with RNH1. Dimerization of two such complexes may occur.

The protein resides in the lysosome. It is found in the cytoplasmic granule. It carries out the reaction an [RNA] containing cytidine + H2O = an [RNA]-3'-cytidine-3'-phosphate + a 5'-hydroxy-ribonucleotide-3'-[RNA].. The enzyme catalyses an [RNA] containing uridine + H2O = an [RNA]-3'-uridine-3'-phosphate + a 5'-hydroxy-ribonucleotide-3'-[RNA].. Its function is as follows. This is a non-secretory ribonuclease. It is a pyrimidine specific nuclease with a slight preference for U. Cytotoxin and helminthotoxin. Possesses a wide variety of biological activities. The chain is Non-secretory ribonuclease (RNASE2) from Macaca nemestrina (Pig-tailed macaque).